The chain runs to 518 residues: DNA nucleotidylexotransferase (518 aa).

The short motif at 11-17 (FGKKRQK) is the Nuclear localization signal element. Residues 27 to 124 (IYEIKFHEFV…KPVDTKGKYQ (98 aa)) enclose the BRCT domain. The tract at residues 153–518 (SQYACQRRTT…EYIQPSERNA (366 aa)) is mediates interaction with DNTTIP2. Residues 260 to 264 (VGLKT) form an involved in DNA binding region. Residues 335-340 (GFRRGK) and 344-347 (HDVD) contribute to the a 2'-deoxyribonucleoside 5'-triphosphate site. 3 residues coordinate Mg(2+): aspartate 345, aspartate 347, and aspartate 442. An a 2'-deoxyribonucleoside 5'-triphosphate-binding site is contributed by 457 to 458 (GW).

Belongs to the DNA polymerase type-X family. As to quaternary structure, interacts with PRP19 and DNTTIP1. Interacts with TRERF1. Forms a ternary complex with DNTTIP2 and core histone. Released from this complex by PCNA. Mg(2+) is required as a cofactor.

Its subcellular location is the nucleus. The enzyme catalyses DNA(n) + a 2'-deoxyribonucleoside 5'-triphosphate = DNA(n+1) + diphosphate. Functionally, template-independent DNA polymerase which catalyzes the random addition of deoxynucleoside 5'-triphosphate to the 3'-end of a DNA initiator. One of the in vivo functions of this enzyme is the addition of nucleotides at the junction (N region) of rearranged Ig heavy chain and T-cell receptor gene segments during the maturation of B- and T-cells. The polypeptide is DNA nucleotidylexotransferase (DNTT) (Monodelphis domestica (Gray short-tailed opossum)).